The following is a 130-amino-acid chain: Small ribosomal subunit protein bS16 (130 aa).

Residues 82-130 are disordered; the sequence is VLPKTERNNPKKAVPGKKAQDRAEEKAAKAAEASEAPADEAPAEEAAAE. Over residues 99–110 the composition is skewed to basic and acidic residues; that stretch reads KAQDRAEEKAAK. Residues 118 to 130 show a composition bias toward acidic residues; that stretch reads PADEAPAEEAAAE.

Belongs to the bacterial ribosomal protein bS16 family.

This is Small ribosomal subunit protein bS16 from Dinoroseobacter shibae (strain DSM 16493 / NCIMB 14021 / DFL 12).